We begin with the raw amino-acid sequence, 634 residues long: 1-deoxy-D-xylulose-5-phosphate synthase (634 aa).

Residues H77 and 118 to 120 (GHA) contribute to the thiamine diphosphate site. D149 contributes to the Mg(2+) binding site. Thiamine diphosphate contacts are provided by residues 150–151 (AS), N178, Y289, and E371. Residue N178 participates in Mg(2+) binding.

Belongs to the transketolase family. DXPS subfamily. As to quaternary structure, homodimer. The cofactor is Mg(2+). Thiamine diphosphate serves as cofactor.

The enzyme catalyses D-glyceraldehyde 3-phosphate + pyruvate + H(+) = 1-deoxy-D-xylulose 5-phosphate + CO2. Its pathway is metabolic intermediate biosynthesis; 1-deoxy-D-xylulose 5-phosphate biosynthesis; 1-deoxy-D-xylulose 5-phosphate from D-glyceraldehyde 3-phosphate and pyruvate: step 1/1. Functionally, catalyzes the acyloin condensation reaction between C atoms 2 and 3 of pyruvate and glyceraldehyde 3-phosphate to yield 1-deoxy-D-xylulose-5-phosphate (DXP). The protein is 1-deoxy-D-xylulose-5-phosphate synthase of Leptospira interrogans serogroup Icterohaemorrhagiae serovar copenhageni (strain Fiocruz L1-130).